A 139-amino-acid polypeptide reads, in one-letter code: D-ribose pyranase (139 aa).

H20 functions as the Proton donor in the catalytic mechanism. Substrate-binding positions include D28, H106, and 128 to 130 (YAN).

Belongs to the RbsD / FucU family. RbsD subfamily. As to quaternary structure, homodecamer.

Its subcellular location is the cytoplasm. It catalyses the reaction beta-D-ribopyranose = beta-D-ribofuranose. It functions in the pathway carbohydrate metabolism; D-ribose degradation; D-ribose 5-phosphate from beta-D-ribopyranose: step 1/2. In terms of biological role, catalyzes the interconversion of beta-pyran and beta-furan forms of D-ribose. This Citrobacter koseri (strain ATCC BAA-895 / CDC 4225-83 / SGSC4696) protein is D-ribose pyranase.